The chain runs to 116 residues: Large ribosomal subunit protein bL17 (116 aa).

This sequence belongs to the bacterial ribosomal protein bL17 family. As to quaternary structure, part of the 50S ribosomal subunit. Contacts protein L32.

The protein is Large ribosomal subunit protein bL17 of Trichormus variabilis (strain ATCC 29413 / PCC 7937) (Anabaena variabilis).